A 281-amino-acid chain; its full sequence is MFSCCFPTSRGCCFRNGGSESLFRQCRRRLIPHPRRLWPFVRRRTQVPQDSPGQALAGQATPEIPSGLPLHIVLVQEEIREPMEAQTHAPGPYADIAALAAPAVEPKPAWEEPPPERALEVEGAPAKDQPSQELPEIMAPTVATGLNAGAENVAGERSGREGVTSTAPASRSHAAPSPGHGGKHGGGDQGIQTGLLYLAGERLLSFAGTTALLLQGLFIVLILVGYISVKVMLKSIKTRLGRRVPAAPPALRRNLLLQAWKCVCNWASRLFAPNVLPRTGS.

2 disordered regions span residues 107–131 (KPAWEEPPPERALEVEGAPAKDQPS) and 150–187 (AENVAGERSGREGVTSTAPASRSHAAPSPGHGGKHGGG). The span at 108 to 120 (PAWEEPPPERALE) shows a compositional bias: basic and acidic residues. Over residues 165-178 (STAPASRSHAAPSP) the composition is skewed to low complexity. A helical membrane pass occupies residues 207 to 227 (AGTTALLLQGLFIVLILVGYI).

Its subcellular location is the membrane. In Homo sapiens (Human), this protein is CMT1A duplicated region transcript 15 protein-like protein (CDRT15L2).